Here is a 292-residue protein sequence, read N- to C-terminus: Sulfofructosephosphate aldolase (292 aa).

Lys-193 serves as the catalytic Schiff-base intermediate with substrate.

The protein belongs to the aldolase LacD family. As to quaternary structure, homotetramer.

The catalysed reaction is 6-deoxy-6-sulfo-D-fructose 1-phosphate = (2S)-3-sulfolactaldehyde + dihydroxyacetone phosphate. Its function is as follows. Cleaves 6-deoxy-6-sulfo-D-fructose 1-phosphate (SFP) to form dihydroxyacetone phosphate (DHAP) and 3-sulfolactaldehyde (SLA). Can also catalyze the reverse reaction. The protein is Sulfofructosephosphate aldolase (yihT) of Salmonella typhimurium (strain LT2 / SGSC1412 / ATCC 700720).